We begin with the raw amino-acid sequence, 253 residues long: MGTILDKIVEQKKVEVAELYETYSPVKEKRKTHSLVKALEQFTVIAEVKRASPSKGDINLHVDVPKQVKTYEECGAGAVSVLTDGQFFKGSFHDLETARAESNIPLLCKDFIIDKIQIDRAYEAGADLILLIVAALSKEKLNELYNYVLEKGLEAIVEVHDEQELEIAIRLNPHVIGINNRNLKTFEVDLSQTEKLGKRLNEENLLWISESGIHSKEDIIRVKRAGAKGVLVGEALMTSSSISNFFEDCKVNI.

It belongs to the TrpC family.

The enzyme catalyses 1-(2-carboxyphenylamino)-1-deoxy-D-ribulose 5-phosphate + H(+) = (1S,2R)-1-C-(indol-3-yl)glycerol 3-phosphate + CO2 + H2O. It functions in the pathway amino-acid biosynthesis; L-tryptophan biosynthesis; L-tryptophan from chorismate: step 4/5. This Bacillus mycoides (strain KBAB4) (Bacillus weihenstephanensis) protein is Indole-3-glycerol phosphate synthase.